Here is a 926-residue protein sequence, read N- to C-terminus: Thyroid peroxidase (926 aa).

An N-terminal signal peptide occupies residues 1–14 (MGARAVLGVTLAVA). Over 19 to 844 (FFASILRRKD…TCVDAGRLPR (826 aa)) the chain is Extracellular. Residue asparagine 129 is glycosylated (N-linked (GlcNAc...) asparagine). A disulfide bridge links cysteine 142 with cysteine 158. Aspartate 238 serves as a coordination point for heme b. Catalysis depends on histidine 239, which acts as the Proton acceptor. Aspartate 240 lines the Ca(2+) pocket. 2 disulfide bridges follow: cysteine 259-cysteine 269 and cysteine 263-cysteine 286. Asparagine 277 and asparagine 307 each carry an N-linked (GlcNAc...) asparagine glycan. Residues threonine 321, phenylalanine 323, aspartate 325, and serine 327 each coordinate Ca(2+). An N-linked (GlcNAc...) asparagine glycan is attached at asparagine 342. Heme b contacts are provided by glutamate 398 and histidine 493. 7 disulfides stabilise this stretch: cysteine 596/cysteine 653, cysteine 694/cysteine 719, cysteine 740/cysteine 780, cysteine 766/cysteine 792, cysteine 798/cysteine 812, cysteine 806/cysteine 821, and cysteine 823/cysteine 836. Positions 738–793 (DACGFPDPVEDGGFLLCEERGQRVLVFSCRHGFRLRGPAQITCTPRGWDSPPPLCK) constitute a Sushi domain. In terms of domain architecture, EGF-like; calcium-binding spans 794–837 (DINECEDETDPPCHASARCKNTKGGVLCECSDPLVLGEDGRTCV). A helical transmembrane segment spans residues 845 to 869 (ASVVSIALGAVLVCGLAGLAWTVVC). Residues 870-926 (RWTHADARPLLPVGEGEGDGKSPSLPLPGCGNRRDVGAAPALEVEQDLSCGSRGLCE) lie on the Cytoplasmic side of the membrane.

The protein belongs to the peroxidase family. XPO subfamily. As to quaternary structure, interacts with DUOX1, DUOX2 and CYBA. The cofactor is Ca(2+). It depends on heme b as a cofactor. Post-translationally, heme is covalently bound through a H(2)O(2)-dependent autocatalytic process. Heme insertion is important for the delivery of protein at the cell surface. In terms of processing, cleaved in its N-terminal part. N-glycosylated; contains mannose and N-acetylglucosamine.

It is found in the membrane. It carries out the reaction 2 iodide + H2O2 + 2 H(+) = diiodine + 2 H2O. The catalysed reaction is [thyroglobulin]-L-tyrosine + iodide + H2O2 + H(+) = [thyroglobulin]-3-iodo-L-tyrosine + 2 H2O. The enzyme catalyses [thyroglobulin]-3-iodo-L-tyrosine + iodide + H2O2 + H(+) = [thyroglobulin]-3,5-diiodo-L-tyrosine + 2 H2O. It catalyses the reaction 2 [thyroglobulin]-3,5-diiodo-L-tyrosine + H2O2 = [thyroglobulin]-L-thyroxine + [thyroglobulin]-dehydroalanine + 2 H2O. It carries out the reaction [thyroglobulin]-3-iodo-L-tyrosine + [thyroglobulin]-3,5-diiodo-L-tyrosine + H2O2 = [thyroglobulin]-3,3',5-triiodo-L-thyronine + [thyroglobulin]-dehydroalanine + 2 H2O. The protein operates within hormone biosynthesis; thyroid hormone biosynthesis. Functionally, iodination and coupling of the hormonogenic tyrosines in thyroglobulin to yield the thyroid hormones T(3) and T(4). This is Thyroid peroxidase (TPO) from Sus scrofa (Pig).